A 239-amino-acid chain; its full sequence is Pyridoxine 5'-phosphate synthase (239 aa).

A 3-amino-2-oxopropyl phosphate-binding site is contributed by N7. A 1-deoxy-D-xylulose 5-phosphate-binding site is contributed by 9–10; the sequence is DH. R18 lines the 3-amino-2-oxopropyl phosphate pocket. H43 serves as the catalytic Proton acceptor. 2 residues coordinate 1-deoxy-D-xylulose 5-phosphate: R45 and H50. E70 functions as the Proton acceptor in the catalytic mechanism. T100 is a 1-deoxy-D-xylulose 5-phosphate binding site. H191 functions as the Proton donor in the catalytic mechanism. 3-amino-2-oxopropyl phosphate contacts are provided by residues G192 and 213–214; that span reads GH.

Belongs to the PNP synthase family. As to quaternary structure, homooctamer; tetramer of dimers.

The protein localises to the cytoplasm. The catalysed reaction is 3-amino-2-oxopropyl phosphate + 1-deoxy-D-xylulose 5-phosphate = pyridoxine 5'-phosphate + phosphate + 2 H2O + H(+). It participates in cofactor biosynthesis; pyridoxine 5'-phosphate biosynthesis; pyridoxine 5'-phosphate from D-erythrose 4-phosphate: step 5/5. Catalyzes the complicated ring closure reaction between the two acyclic compounds 1-deoxy-D-xylulose-5-phosphate (DXP) and 3-amino-2-oxopropyl phosphate (1-amino-acetone-3-phosphate or AAP) to form pyridoxine 5'-phosphate (PNP) and inorganic phosphate. This is Pyridoxine 5'-phosphate synthase from Desulforapulum autotrophicum (strain ATCC 43914 / DSM 3382 / VKM B-1955 / HRM2) (Desulfobacterium autotrophicum).